The following is a 233-amino-acid chain: UPF0758 protein TTE0897 (233 aa).

Residues 108-230 enclose the MPN domain; sequence SVTSPEDVIN…GISLKEKGYY (123 aa). H179, H181, and D192 together coordinate Zn(2+). The short motif at 179–192 is the JAMM motif element; sequence HNHPSGDPTPSRED.

Belongs to the UPF0758 family.

This Caldanaerobacter subterraneus subsp. tengcongensis (strain DSM 15242 / JCM 11007 / NBRC 100824 / MB4) (Thermoanaerobacter tengcongensis) protein is UPF0758 protein TTE0897.